We begin with the raw amino-acid sequence, 467 residues long: Dihydrolipoyl dehydrogenase 3 (467 aa).

FAD is bound by residues 34–43 (EGRETLGGTC), Lys-52, and Ala-116. Cys-43 and Cys-48 form a disulfide bridge. NAD(+) contacts are provided by residues 182 to 186 (GAGVI), Glu-205, Val-239, and 272 to 275 (AIGR). FAD is bound by residues Asp-314 and Ala-322. Residue His-446 is the Proton acceptor of the active site.

This sequence belongs to the class-I pyridine nucleotide-disulfide oxidoreductase family. Homodimer. It depends on FAD as a cofactor.

The protein localises to the cytoplasm. It carries out the reaction N(6)-[(R)-dihydrolipoyl]-L-lysyl-[protein] + NAD(+) = N(6)-[(R)-lipoyl]-L-lysyl-[protein] + NADH + H(+). Its function is as follows. LPD-3 may substitute for lipoamide dehydrogenase of the 2-oxoglutarate dehydrogenase and pyruvate multienzyme complexes when the latter is inactive or missing. The protein is Dihydrolipoyl dehydrogenase 3 (lpd3) of Pseudomonas aeruginosa (strain ATCC 15692 / DSM 22644 / CIP 104116 / JCM 14847 / LMG 12228 / 1C / PRS 101 / PAO1).